The primary structure comprises 371 residues: S-adenosylmethionine:tRNA ribosyltransferase-isomerase (371 aa).

The protein belongs to the QueA family. In terms of assembly, monomer.

The protein resides in the cytoplasm. It catalyses the reaction 7-aminomethyl-7-carbaguanosine(34) in tRNA + S-adenosyl-L-methionine = epoxyqueuosine(34) in tRNA + adenine + L-methionine + 2 H(+). It functions in the pathway tRNA modification; tRNA-queuosine biosynthesis. Its function is as follows. Transfers and isomerizes the ribose moiety from AdoMet to the 7-aminomethyl group of 7-deazaguanine (preQ1-tRNA) to give epoxyqueuosine (oQ-tRNA). In Prochlorococcus marinus (strain MIT 9313), this protein is S-adenosylmethionine:tRNA ribosyltransferase-isomerase.